A 228-amino-acid chain; its full sequence is Thrombin-like enzyme gyroxin analog (228 aa).

Positions 1–222 constitute a Peptidase S1 domain; that stretch reads VIGGDECNIN…YLDWIQSVIA (222 aa). 6 cysteine pairs are disulfide-bonded: Cys-7/Cys-138, Cys-28/Cys-44, Cys-78/Cys-227, Cys-117/Cys-183, Cys-149/Cys-162, and Cys-173/Cys-198. His-43 functions as the Charge relay system in the catalytic mechanism. N-linked (GlcNAc...) asparagine glycosylation is found at Asn-45 and Asn-81. Asp-88 acts as the Charge relay system in catalysis. A glycan (N-linked (GlcNAc...) asparagine) is linked at Asn-145. Ser-177 acts as the Charge relay system in catalysis. Asn-224 carries an N-linked (GlcNAc...) asparagine glycan.

The protein belongs to the peptidase S1 family. Snake venom subfamily. Monomer. In terms of tissue distribution, expressed by the venom gland.

It is found in the secreted. It catalyses the reaction Selective cleavage of Arg-|-Xaa bond in fibrinogen, to form fibrin, and release fibrinopeptide A. The specificity of further degradation of fibrinogen varies with species origin of the enzyme.. With respect to regulation, inhibited competitively by amidines and guanidines, and irreversibly inhibited by diisopropylfluorophosphate. Its function is as follows. Thrombin-like snake venom serine protease, that cleaves alpha-chain of fibrinogen (FGA) releases only fibrinopeptide A. Shows coagulant, esterase and amidase activities. Induces the barrel rotation syndrome in mice, which is manifested by gyroxin-like, rapid rolling motions. May also reversibly increase the permeability of the blood brain barrier (BBB) in mice. The sequence is that of Thrombin-like enzyme gyroxin analog from Lachesis muta muta (Bushmaster).